A 386-amino-acid chain; its full sequence is Succinate--CoA ligase [ADP-forming] subunit beta (386 aa).

Positions 9–244 (KQVLRSSNLN…DSQIDAKEAA (236 aa)) constitute an ATP-grasp domain. Residues lysine 46, 53–55 (GRG), glutamate 99, leucine 102, and glutamate 107 each bind ATP. Residues asparagine 199 and aspartate 213 each contribute to the Mg(2+) site. Residues asparagine 264 and 321 to 323 (GIV) contribute to the substrate site.

This sequence belongs to the succinate/malate CoA ligase beta subunit family. As to quaternary structure, heterotetramer of two alpha and two beta subunits. The cofactor is Mg(2+).

The enzyme catalyses succinate + ATP + CoA = succinyl-CoA + ADP + phosphate. The catalysed reaction is GTP + succinate + CoA = succinyl-CoA + GDP + phosphate. It participates in carbohydrate metabolism; tricarboxylic acid cycle; succinate from succinyl-CoA (ligase route): step 1/1. Succinyl-CoA synthetase functions in the citric acid cycle (TCA), coupling the hydrolysis of succinyl-CoA to the synthesis of either ATP or GTP and thus represents the only step of substrate-level phosphorylation in the TCA. The beta subunit provides nucleotide specificity of the enzyme and binds the substrate succinate, while the binding sites for coenzyme A and phosphate are found in the alpha subunit. The protein is Succinate--CoA ligase [ADP-forming] subunit beta of Thiobacillus denitrificans (strain ATCC 25259 / T1).